The chain runs to 91 residues: Acylphosphatase (91 aa).

The region spanning 4-91 (RAMVTVKGMV…GEFDDFHIAY (88 aa)) is the Acylphosphatase-like domain. Active-site residues include Arg19 and Asn37.

The protein belongs to the acylphosphatase family.

The catalysed reaction is an acyl phosphate + H2O = a carboxylate + phosphate + H(+). The protein is Acylphosphatase (acyP) of Geotalea uraniireducens (strain Rf4) (Geobacter uraniireducens).